We begin with the raw amino-acid sequence, 842 residues long: MAGFNRNLTLVTTLLIFHQLCSNVSCSTSNSFTRNHTIREGDSLISEDESFELGFFTPKNSTLRYVGIWYKNIEPQTVVWVANREKPLLDHKGALKIADDGNLVIVNGQNETIWSTNVEPESNNTVAVLFKTGDLVLCSDSDRRKWYWESFNNPTDTFLPGMRVRVNPSLGENRAFIPWKSESDPSPGKYSMGIDPVGALEIVIWEGEKRKWRSGPWNSAIFTGIPDMLRFTNYIYGFKLSSPPDRDGSVYFTYVASDSSDFLRFWIRPDGVEEQFRWNKDIRNWNLLQWKPSTECEKYNRCGNYSVCDDSKEFDSGKCSCIDGFEPVHQDQWNNRDFSGGCQRRVPLNCNQSLVAGQEDGFTVLKGIKVPDFGSVVLHNNSETCKDVCARDCSCKAYALVVGIGCMIWTRDLIDMEHFERGGNSINIRLAGSKLGGGKENSTLWIIVFSVIGAFLLGLCIWILWKFKKSLKAFLWKKKDITVSDIIENRDYSSSPIKVLVGDQVDTPDLPIFSFDSVASATGDFAEENKLGQGGFGTVYKGNFSEGREIAVKRLSGKSKQGLEEFKNEILLIAKLQHRNLVRLLGCCIEDNEKMLLYEYMPNKSLDRFLFDESKQGSLDWRKRWEVIGGIARGLLYLHRDSRLKIIHRDLKASNILLDTEMNPKISDFGMARIFNYRQDHANTIRVVGTYGYMAPEYAMEGIFSEKSDVYSFGVLILEIVSGRKNVSFRGTDHGSLIGYAWHLWSQGKTKEMIDPIVKDTRDVTEAMRCIHVGMLCTQDSVIHRPNMGSVLLMLESQTSQLPPPRQPTFHSFLNSGDIELNFDGHDVASVNDVTFTTIVGR.

The N-terminal stretch at 1–22 is a signal peptide; it reads MAGFNRNLTLVTTLLIFHQLCS. 9 N-linked (GlcNAc...) asparagine glycosylation sites follow: Asn-7, Asn-23, Asn-35, Asn-60, Asn-110, Asn-123, Asn-304, Asn-351, and Asn-380. At 23 to 443 the chain is on the extracellular side; sequence NVSCSTSNSF…KLGGGKENST (421 aa). Residues 29–150 form the Bulb-type lectin domain; that stretch reads SNSFTRNHTI…SDRRKWYWES (122 aa). Residues 292–331 form the EGF-like domain; that stretch reads PSTECEKYNRCGNYSVCDDSKEFDSGKCSCIDGFEPVHQD. Intrachain disulfides connect Cys-296/Cys-308 and Cys-302/Cys-319. The region spanning 350-431 is the PAN domain; that stretch reads CNQSLVAGQE…GGNSINIRLA (82 aa). Disulfide bonds link Cys-385-Cys-406 and Cys-389-Cys-395. N-linked (GlcNAc...) asparagine glycosylation is present at Asn-441. The helical transmembrane segment at 444 to 464 threads the bilayer; the sequence is LWIIVFSVIGAFLLGLCIWIL. The Cytoplasmic segment spans residues 465 to 842; the sequence is WKFKKSLKAF…DVTFTTIVGR (378 aa). Residues 525-814 enclose the Protein kinase domain; the sequence is FAEENKLGQG…PRQPTFHSFL (290 aa). Residues 531 to 539 and Lys-553 each bind ATP; that span reads LGQGGFGTV. A Phosphoserine modification is found at Ser-559. The caM-binding stretch occupies residues 614–631; the sequence is SKQGSLDWRKRWEVIGGI. Residue Asp-650 is the Proton acceptor of the active site. A phosphoserine mark is found at Ser-654 and Ser-667. Thr-684 is subject to Phosphothreonine. Ser-728 and Ser-830 each carry phosphoserine. Thr-837 carries the phosphothreonine modification.

It belongs to the protein kinase superfamily. Ser/Thr protein kinase family.

The protein resides in the cell membrane. It catalyses the reaction L-seryl-[protein] + ATP = O-phospho-L-seryl-[protein] + ADP + H(+). It carries out the reaction L-threonyl-[protein] + ATP = O-phospho-L-threonyl-[protein] + ADP + H(+). The protein is Putative G-type lectin S-receptor-like serine/threonine-protein kinase At1g61610 of Arabidopsis thaliana (Mouse-ear cress).